A 204-amino-acid polypeptide reads, in one-letter code: Urease accessory protein UreG (204 aa).

10 to 17 provides a ligand contact to GTP; that stretch reads GPVGAGKT.

It belongs to the SIMIBI class G3E GTPase family. UreG subfamily. As to quaternary structure, homodimer. UreD, UreF and UreG form a complex that acts as a GTP-hydrolysis-dependent molecular chaperone, activating the urease apoprotein by helping to assemble the nickel containing metallocenter of UreC. The UreE protein probably delivers the nickel.

Its subcellular location is the cytoplasm. Functionally, facilitates the functional incorporation of the urease nickel metallocenter. This process requires GTP hydrolysis, probably effectuated by UreG. This Bacillus sp. (strain TB-90) protein is Urease accessory protein UreG.